The sequence spans 470 residues: Aldehyde dehydrogenase family 3 comG (470 aa).

196–201 provides a ligand contact to NAD(+); the sequence is GSVKVG. Residues Glu218 and Cys252 contribute to the active site.

Belongs to the aldehyde dehydrogenase family.

The protein localises to the cytoplasm. It carries out the reaction an aldehyde + NADP(+) + H2O = a carboxylate + NADPH + 2 H(+). It catalyses the reaction an aldehyde + NAD(+) + H2O = a carboxylate + NADH + 2 H(+). The chain is Aldehyde dehydrogenase family 3 comG (comG) from Dictyostelium discoideum (Social amoeba).